We begin with the raw amino-acid sequence, 445 residues long: Putative H/ACA ribonucleoprotein complex subunit 4 (445 aa).

Residues methionine 1–threonine 32 are disordered. The segment covering glutamine 20 to threonine 32 has biased composition (polar residues). The Nucleophile role is filled by aspartate 113. The region spanning histidine 284 to methionine 359 is the PUA domain. Residues threonine 407–glutamate 445 form a disordered region.

Belongs to the pseudouridine synthase TruB family. Component of the small nucleolar ribonucleoprotein particle containing H/ACA-type snoRNAs (H/ACA snoRNPs).

Its subcellular location is the nucleus. It is found in the nucleolus. The enzyme catalyses a uridine in RNA = a pseudouridine in RNA. Plays a central role in ribosomal RNA processing. Probable catalytic subunit of H/ACA small nucleolar ribonucleoprotein (H/ACA snoRNP) complex, which catalyzes pseudouridylation of rRNA. This involves the isomerization of uridine such that the ribose is subsequently attached to C5, instead of the normal N1. Pseudouridine ('psi') residues may serve to stabilize the conformation of rRNAs. In Caenorhabditis briggsae, this protein is Putative H/ACA ribonucleoprotein complex subunit 4.